Here is a 173-residue protein sequence, read N- to C-terminus: NADH-ubiquinone oxidoreductase chain 6 (173 aa).

The next 5 helical transmembrane spans lie at 1–21 (MTYL…AVAS), 24–44 (APYF…GVLV), 53–73 (LVLF…SAAL), 86–106 (SVVG…GVFW), and 139–159 (YGGG…FVVL).

It belongs to the complex I subunit 6 family.

It localises to the mitochondrion membrane. The catalysed reaction is a ubiquinone + NADH + 5 H(+)(in) = a ubiquinol + NAD(+) + 4 H(+)(out). Functionally, core subunit of the mitochondrial membrane respiratory chain NADH dehydrogenase (Complex I) that is believed to belong to the minimal assembly required for catalysis. Complex I functions in the transfer of electrons from NADH to the respiratory chain. The immediate electron acceptor for the enzyme is believed to be ubiquinone. This Formosania lacustris (Oriental stream loach) protein is NADH-ubiquinone oxidoreductase chain 6 (MT-ND6).